We begin with the raw amino-acid sequence, 333 residues long: tRNA-dihydrouridine(16) synthase (333 aa).

FMN contacts are provided by residues P19–Q21 and Q80. The Proton donor role is filled by C110. Residues K151, N211–D213, and G235–R236 each bind FMN.

This sequence belongs to the Dus family. DusC subfamily. It depends on FMN as a cofactor.

The enzyme catalyses 5,6-dihydrouridine(16) in tRNA + NADP(+) = uridine(16) in tRNA + NADPH + H(+). The catalysed reaction is 5,6-dihydrouridine(16) in tRNA + NAD(+) = uridine(16) in tRNA + NADH + H(+). Functionally, catalyzes the synthesis of 5,6-dihydrouridine (D), a modified base found in the D-loop of most tRNAs, via the reduction of the C5-C6 double bond in target uridines. Specifically modifies U16 in tRNAs. In Neisseria meningitidis serogroup A / serotype 4A (strain DSM 15465 / Z2491), this protein is tRNA-dihydrouridine(16) synthase.